Here is a 364-residue protein sequence, read N- to C-terminus: FNIP repeat-containing protein DDB_G0277323 (364 aa).

5 FNIP repeats span residues 57-98 (MNIE…DLKY), 155-198 (YDCL…FGWT), 214-244 (LRVL…FGSS), 245-271 (FNQV…NQPI), and 295-340 (FNQP…FINN).

The protein is FNIP repeat-containing protein DDB_G0277323 of Dictyostelium discoideum (Social amoeba).